The sequence spans 335 residues: Proline-rich protein 1 (335 aa).

The first 22 residues, 1-22, serve as a signal peptide directing secretion; sequence MAITRASFAICILLSLATIATA. A run of 39 repeats spans residues 30–34, 35–39, 40–43, 44–48, 49–53, 54–57, 58–62, 63–67, 68–71, 72–76, 77–81, 82–86, 87–91, 92–96, 97–101, 102–106, 107–110, 111–115, 116–120, 121–125, 126–130, 131–135, 136–139, 140–144, 145–148, 149–153, 154–158, 159–163, 164–167, 168–172, 173–177, 178–182, 184–189, 190–194, 195–200, 201–207, 208–212, 284–288, and 319–323. Residues 30–323 are 39 X 5 AA approximate repeats; it reads PPVYTSPVNK…LFNVGPFYFT (294 aa).

Belongs to the plant proline-rich protein superfamily. ENOD12 family. In terms of tissue distribution, exclusively expressed in roots, especially in root hairs.

It is found in the secreted. The protein localises to the cell wall. Functionally, may contribute to cell wall structure in root hairs. In Arabidopsis thaliana (Mouse-ear cress), this protein is Proline-rich protein 1 (PRP1).